We begin with the raw amino-acid sequence, 209 residues long: Small ribosomal subunit protein mS23 (209 aa).

It belongs to the mitochondrion-specific ribosomal protein mS23 family. Component of the mitochondrial small ribosomal subunit.

It is found in the mitochondrion. This is Small ribosomal subunit protein mS23 (rsm25) from Sclerotinia sclerotiorum (strain ATCC 18683 / 1980 / Ss-1) (White mold).